The sequence spans 125 residues: Large ribosomal subunit protein bL12 (125 aa).

The protein belongs to the bacterial ribosomal protein bL12 family. Homodimer. Part of the ribosomal stalk of the 50S ribosomal subunit. Forms a multimeric L10(L12)X complex, where L10 forms an elongated spine to which 2 to 4 L12 dimers bind in a sequential fashion. Binds GTP-bound translation factors.

Functionally, forms part of the ribosomal stalk which helps the ribosome interact with GTP-bound translation factors. Is thus essential for accurate translation. This chain is Large ribosomal subunit protein bL12, found in Sinorhizobium medicae (strain WSM419) (Ensifer medicae).